The sequence spans 321 residues: Putative ribose-phosphate pyrophosphokinase 2 (321 aa).

Residues 43 to 45 and 102 to 103 contribute to the ATP site; these read DGE and RQ. Positions 136 and 176 each coordinate Mg(2+). Residue aspartate 225 participates in D-ribose 5-phosphate binding.

The protein belongs to the ribose-phosphate pyrophosphokinase family. Class I subfamily. Homohexamer. It depends on Mg(2+) as a cofactor.

The protein localises to the cytoplasm. The catalysed reaction is D-ribose 5-phosphate + ATP = 5-phospho-alpha-D-ribose 1-diphosphate + AMP + H(+). It functions in the pathway metabolic intermediate biosynthesis; 5-phospho-alpha-D-ribose 1-diphosphate biosynthesis; 5-phospho-alpha-D-ribose 1-diphosphate from D-ribose 5-phosphate (route I): step 1/1. Involved in the biosynthesis of the central metabolite phospho-alpha-D-ribosyl-1-pyrophosphate (PRPP) via the transfer of pyrophosphoryl group from ATP to 1-hydroxyl of ribose-5-phosphate (Rib-5-P). In Lactiplantibacillus plantarum (strain ATCC BAA-793 / NCIMB 8826 / WCFS1) (Lactobacillus plantarum), this protein is Putative ribose-phosphate pyrophosphokinase 2.